Here is a 224-residue protein sequence, read N- to C-terminus: UPF0173 metal-dependent hydrolase STH3160 (224 aa).

The protein belongs to the UPF0173 family.

This chain is UPF0173 metal-dependent hydrolase STH3160, found in Symbiobacterium thermophilum (strain DSM 24528 / JCM 14929 / IAM 14863 / T).